Reading from the N-terminus, the 223-residue chain is Urease accessory protein UreF (223 aa).

The protein belongs to the UreF family. As to quaternary structure, ureD, UreF and UreG form a complex that acts as a GTP-hydrolysis-dependent molecular chaperone, activating the urease apoprotein by helping to assemble the nickel containing metallocenter of UreC. The UreE protein probably delivers the nickel.

It localises to the cytoplasm. Functionally, required for maturation of urease via the functional incorporation of the urease nickel metallocenter. This is Urease accessory protein UreF from Sinorhizobium medicae (strain WSM419) (Ensifer medicae).